Reading from the N-terminus, the 392-residue chain is Lipid-A-disaccharide synthase (392 aa).

This sequence belongs to the LpxB family.

It carries out the reaction a lipid X + a UDP-2-N,3-O-bis[(3R)-3-hydroxyacyl]-alpha-D-glucosamine = a lipid A disaccharide + UDP + H(+). The protein operates within bacterial outer membrane biogenesis; LPS lipid A biosynthesis. Functionally, condensation of UDP-2,3-diacylglucosamine and 2,3-diacylglucosamine-1-phosphate to form lipid A disaccharide, a precursor of lipid A, a phosphorylated glycolipid that anchors the lipopolysaccharide to the outer membrane of the cell. This Syntrophotalea carbinolica (strain DSM 2380 / NBRC 103641 / GraBd1) (Pelobacter carbinolicus) protein is Lipid-A-disaccharide synthase.